A 224-amino-acid polypeptide reads, in one-letter code: Probable Brix domain-containing ribosomal biogenesis protein (224 aa).

The region spanning 1–196 is the Brix domain; it reads MMLITTSHRP…IWIMEDGRRW (196 aa).

In terms of biological role, probably involved in the biogenesis of the ribosome. In Pyrococcus abyssi (strain GE5 / Orsay), this protein is Probable Brix domain-containing ribosomal biogenesis protein.